A 652-amino-acid polypeptide reads, in one-letter code: Acetyl-coenzyme A synthetase (652 aa).

Residues 191 to 194, threonine 311, and asparagine 335 each bind CoA; that span reads RAGR. ATP is bound by residues 387–389, 411–416, aspartate 500, and arginine 515; these read GEP and DTWWQT. A CoA-binding site is contributed by serine 523. Arginine 526 is an ATP binding site. Mg(2+)-binding residues include valine 537, histidine 539, and isoleucine 542. Arginine 584 provides a ligand contact to CoA. Lysine 609 bears the N6-acetyllysine mark.

The protein belongs to the ATP-dependent AMP-binding enzyme family. The cofactor is Mg(2+). Post-translationally, acetylated. Deacetylation by the SIR2-homolog deacetylase activates the enzyme.

It catalyses the reaction acetate + ATP + CoA = acetyl-CoA + AMP + diphosphate. Its function is as follows. Catalyzes the conversion of acetate into acetyl-CoA (AcCoA), an essential intermediate at the junction of anabolic and catabolic pathways. Acs undergoes a two-step reaction. In the first half reaction, Acs combines acetate with ATP to form acetyl-adenylate (AcAMP) intermediate. In the second half reaction, it can then transfer the acetyl group from AcAMP to the sulfhydryl group of CoA, forming the product AcCoA. Functionally, enables the cell to use acetate during aerobic growth to generate energy via the TCA cycle, and biosynthetic compounds via the glyoxylate shunt. Acetylates CheY, the response regulator involved in flagellar movement and chemotaxis. This Escherichia coli O6:H1 (strain CFT073 / ATCC 700928 / UPEC) protein is Acetyl-coenzyme A synthetase.